The chain runs to 94 residues: Large ribosomal subunit protein bL27 (94 aa).

Positions 1-10 (MQFLFNIQLF) are excised as a propeptide.

This sequence belongs to the bacterial ribosomal protein bL27 family. In terms of processing, the N-terminus is cleaved by ribosomal processing cysteine protease Prp.

The sequence is that of Large ribosomal subunit protein bL27 from Fusobacterium nucleatum subsp. nucleatum (strain ATCC 25586 / DSM 15643 / BCRC 10681 / CIP 101130 / JCM 8532 / KCTC 2640 / LMG 13131 / VPI 4355).